Reading from the N-terminus, the 240-residue chain is Cysteine-rich secretory protein (240 aa).

The signal sequence occupies residues 1-19 (MIAFIVLPILAAVLQQSSG). Residues 38–166 (VDLHNSLRRS…EYSYFYVCQY (129 aa)) enclose the SCP domain. 8 disulfides stabilise this stretch: Cys75/Cys153, Cys92/Cys167, Cys148/Cys164, Cys186/Cys193, Cys189/Cys198, Cys202/Cys235, Cys211/Cys229, and Cys220/Cys233. The 34-residue stretch at 202 to 235 (CTKEDKYSNCKSLVQQAGCQDKQMQSDCSAICFC) folds into the ShKT domain.

The protein belongs to the CRISP family. As to expression, expressed by the venom gland.

Its subcellular location is the secreted. In terms of biological role, weakly blocks contraction of smooth muscle elicited by high potassium-induced depolarization, but does not block caffeine-stimulated contraction. May target voltage-gated calcium channels on smooth muscle. In Crotalus adamanteus (Eastern diamondback rattlesnake), this protein is Cysteine-rich secretory protein.